A 379-amino-acid chain; its full sequence is Anhydro-N-acetylmuramic acid kinase (379 aa).

Residue 9–16 (GTSVDGID) participates in ATP binding.

The protein belongs to the anhydro-N-acetylmuramic acid kinase family.

It carries out the reaction 1,6-anhydro-N-acetyl-beta-muramate + ATP + H2O = N-acetyl-D-muramate 6-phosphate + ADP + H(+). It participates in amino-sugar metabolism; 1,6-anhydro-N-acetylmuramate degradation. Its pathway is cell wall biogenesis; peptidoglycan recycling. Catalyzes the specific phosphorylation of 1,6-anhydro-N-acetylmuramic acid (anhMurNAc) with the simultaneous cleavage of the 1,6-anhydro ring, generating MurNAc-6-P. Is required for the utilization of anhMurNAc either imported from the medium or derived from its own cell wall murein, and thus plays a role in cell wall recycling. The polypeptide is Anhydro-N-acetylmuramic acid kinase (Acaryochloris marina (strain MBIC 11017)).